A 355-amino-acid chain; its full sequence is UDP-N-acetylglucosamine--N-acetylmuramyl-(pentapeptide) pyrophosphoryl-undecaprenol N-acetylglucosamine transferase (355 aa).

UDP-N-acetyl-alpha-D-glucosamine-binding positions include 15 to 17 (TGG), asparagine 127, arginine 163, serine 191, isoleucine 244, 263 to 268 (ALTVSE), and glutamine 288.

The protein belongs to the glycosyltransferase 28 family. MurG subfamily.

It is found in the cell inner membrane. The enzyme catalyses di-trans,octa-cis-undecaprenyl diphospho-N-acetyl-alpha-D-muramoyl-L-alanyl-D-glutamyl-meso-2,6-diaminopimeloyl-D-alanyl-D-alanine + UDP-N-acetyl-alpha-D-glucosamine = di-trans,octa-cis-undecaprenyl diphospho-[N-acetyl-alpha-D-glucosaminyl-(1-&gt;4)]-N-acetyl-alpha-D-muramoyl-L-alanyl-D-glutamyl-meso-2,6-diaminopimeloyl-D-alanyl-D-alanine + UDP + H(+). The protein operates within cell wall biogenesis; peptidoglycan biosynthesis. Cell wall formation. Catalyzes the transfer of a GlcNAc subunit on undecaprenyl-pyrophosphoryl-MurNAc-pentapeptide (lipid intermediate I) to form undecaprenyl-pyrophosphoryl-MurNAc-(pentapeptide)GlcNAc (lipid intermediate II). The chain is UDP-N-acetylglucosamine--N-acetylmuramyl-(pentapeptide) pyrophosphoryl-undecaprenol N-acetylglucosamine transferase from Escherichia coli (strain K12 / MC4100 / BW2952).